The sequence spans 449 residues: tRNA-2-methylthio-N(6)-dimethylallyladenosine synthase (449 aa).

In terms of domain architecture, MTTase N-terminal spans 4–119 (RTFHIETFGC…APQALDRLVE (116 aa)). [4Fe-4S] cluster is bound by residues Cys-13, Cys-48, Cys-82, Cys-158, Cys-162, and Cys-165. Positions 144–375 (GAVPASVFVN…QTLQNRLTER (232 aa)) constitute a Radical SAM core domain. One can recognise a TRAM domain in the interval 378-446 (QDMVGKKVEV…KHSLLAEQAG (69 aa)).

The protein belongs to the methylthiotransferase family. MiaB subfamily. Monomer. [4Fe-4S] cluster serves as cofactor.

It is found in the cytoplasm. It catalyses the reaction N(6)-dimethylallyladenosine(37) in tRNA + (sulfur carrier)-SH + AH2 + 2 S-adenosyl-L-methionine = 2-methylsulfanyl-N(6)-dimethylallyladenosine(37) in tRNA + (sulfur carrier)-H + 5'-deoxyadenosine + L-methionine + A + S-adenosyl-L-homocysteine + 2 H(+). Catalyzes the methylthiolation of N6-(dimethylallyl)adenosine (i(6)A), leading to the formation of 2-methylthio-N6-(dimethylallyl)adenosine (ms(2)i(6)A) at position 37 in tRNAs that read codons beginning with uridine. This chain is tRNA-2-methylthio-N(6)-dimethylallyladenosine synthase, found in Nitratidesulfovibrio vulgaris (strain DP4) (Desulfovibrio vulgaris).